Here is a 188-residue protein sequence, read N- to C-terminus: UPF0301 protein Tcr_1827 (188 aa).

It belongs to the UPF0301 (AlgH) family.

This is UPF0301 protein Tcr_1827 from Hydrogenovibrio crunogenus (strain DSM 25203 / XCL-2) (Thiomicrospira crunogena).